The chain runs to 404 residues: Argininosuccinate synthase (404 aa).

ATP contacts are provided by residues 11–19 and alanine 38; that span reads AYSGGLDTS. L-citrulline-binding residues include tyrosine 91 and serine 96. Glycine 121 provides a ligand contact to ATP. L-aspartate is bound by residues threonine 123, asparagine 127, and aspartate 128. Asparagine 127 is a binding site for L-citrulline. Residues arginine 131, serine 181, serine 190, glutamate 266, and tyrosine 278 each contribute to the L-citrulline site.

Belongs to the argininosuccinate synthase family. Type 1 subfamily. Homotetramer.

The protein resides in the cytoplasm. The catalysed reaction is L-citrulline + L-aspartate + ATP = 2-(N(omega)-L-arginino)succinate + AMP + diphosphate + H(+). It participates in amino-acid biosynthesis; L-arginine biosynthesis; L-arginine from L-ornithine and carbamoyl phosphate: step 2/3. This Sulfurimonas denitrificans (strain ATCC 33889 / DSM 1251) (Thiomicrospira denitrificans (strain ATCC 33889 / DSM 1251)) protein is Argininosuccinate synthase.